A 295-amino-acid polypeptide reads, in one-letter code: MRHLITTKDFNKVEIMELFKEASDFLDEKPRTFLEGKSITTIFFENSTRTLSSFESAARRLGARVLRLDVSRSSSSKGETLYDTAANLDAMSPNAIVVRHANSGVPLILAKHMHCPVVNGGDGKHAHPTQALLDLFTIYNHFQGNVEGKKICIVGDIKNSRVAASNIELLSRFNLDITLVAPPHFMPNTHLKKHYKLDENIIANSDIIMSLRTQTERHNKTVYASLKDYANDFCIQKSLVKDKKLILLHPGPVNRNIDISDEMMSNERTLVLKQVKNGVAIRMAVLKKLILENEG.

The carbamoyl phosphate site is built by Arg-49 and Thr-50. Residue Lys-77 coordinates L-aspartate. The carbamoyl phosphate site is built by Arg-99, His-127, and Gln-130. 2 residues coordinate L-aspartate: Arg-161 and Arg-212. Residues Gly-251 and Pro-252 each coordinate carbamoyl phosphate.

Belongs to the aspartate/ornithine carbamoyltransferase superfamily. ATCase family. Heterododecamer (2C3:3R2) of six catalytic PyrB chains organized as two trimers (C3), and six regulatory PyrI chains organized as three dimers (R2).

The catalysed reaction is carbamoyl phosphate + L-aspartate = N-carbamoyl-L-aspartate + phosphate + H(+). It functions in the pathway pyrimidine metabolism; UMP biosynthesis via de novo pathway; (S)-dihydroorotate from bicarbonate: step 2/3. In terms of biological role, catalyzes the condensation of carbamoyl phosphate and aspartate to form carbamoyl aspartate and inorganic phosphate, the committed step in the de novo pyrimidine nucleotide biosynthesis pathway. In Campylobacter jejuni subsp. jejuni serotype O:2 (strain ATCC 700819 / NCTC 11168), this protein is Aspartate carbamoyltransferase catalytic subunit.